The sequence spans 307 residues: 2-phospho-L-lactate transferase (307 aa).

7,8-didemethyl-8-hydroxy-5-deazariboflavin contacts are provided by Asp-48 and Lys-87.

This sequence belongs to the CofD family. In terms of assembly, homodimer. Requires Mg(2+) as cofactor.

The enzyme catalyses (2S)-lactyl-2-diphospho-5'-guanosine + 7,8-didemethyl-8-hydroxy-5-deazariboflavin = oxidized coenzyme F420-0 + GMP + H(+). Its pathway is cofactor biosynthesis; coenzyme F420 biosynthesis. Catalyzes the transfer of the 2-phospholactate moiety from (2S)-lactyl-2-diphospho-5'-guanosine to 7,8-didemethyl-8-hydroxy-5-deazariboflavin (FO) with the formation of oxidized coenzyme F420-0 and GMP. This chain is 2-phospho-L-lactate transferase, found in Methanosarcina acetivorans (strain ATCC 35395 / DSM 2834 / JCM 12185 / C2A).